Reading from the N-terminus, the 189-residue chain is Leucine repeat adapter protein 25 (189 aa).

S28 carries the phosphoserine modification. The segment at 54–82 (ELSRAARAPDGPRHAAGSANSGSAAGPRR) is disordered. Low complexity predominate over residues 68 to 79 (AAGSANSGSAAG). One copy of the LRR repeat lies at 86–114 (LDSALAALRKEMVGLRQLDMSLLCQLWGL). The disordered stretch occupies residues 136–175 (SSLHSDSSYPPDAGLSDDEEPPDASLPPDPPPLTVPQTHN). The span at 159-169 (ASLPPDPPPLT) shows a compositional bias: pro residues. S188 is modified (phosphoserine).

This sequence belongs to the FAM89 family. Interacts with SKI. Interacts (via LRR repeat) with CDC42BPA (via AGC-kinase C-terminal domain), CDC42BPB (via AGC-kinase C-terminal domain) and LIMK1 (via LIM zinc-binding domains). Forms a tripartite complex with CDC42BPA, CDC42BPB and LIMK1. As to quaternary structure, (Microbial infection) Interacts with mouse mammary tumor virus (MMTV) envelope glycoprotein gp70. In terms of tissue distribution, widely expressed. Expressed in the early postnatal brain.

Its subcellular location is the cytoplasm. It localises to the cell projection. It is found in the lamellipodium. The protein resides in the cell surface. Negatively regulates TGF-beta-induced signaling; in cooperation with SKI prevents the translocation of SMAD2 from the nucleus to the cytoplasm in response to TGF-beta. Acts as an adapter that mediates the specific recognition of LIMK1 by CDC42BPA and CDC42BPB in the lamellipodia. LRAP25-mediated CDC42BPA/CDC42BPB targeting to LIMK1 and the lamellipodium results in LIMK1 activation and the subsequent phosphorylation of CFL1 which is important for lamellipodial F-actin regulation. In terms of biological role, (Microbial infection) May be a receptor for mouse mammary tumor virus (MMTV). The protein is Leucine repeat adapter protein 25 of Mus musculus (Mouse).